The chain runs to 506 residues: Chorion-specific transcription factor GCMb (506 aa).

The GCM DNA-binding region spans 19 to 174 (LSWDINDPQM…KSETEARRSA (156 aa)). Zn(2+) is bound by residues Cys81, Cys87, Cys91, Cys118, Cys121, Cys130, His157, and His159. The segment covering 155-172 (GVHDHPRPESKSETEARR) has biased composition (basic and acidic residues). Residues 155–213 (GVHDHPRPESKSETEARRSAIKRQMASFYQPQKKRIRESEAEENQDSSGHFSNIPPLEN) are disordered. Positions 379 to 395 (LQTVITTTTKVSYQAYQ) are C-terminal conserved inhibitory domain (CCID).

The protein resides in the nucleus. Functionally, transcription factor that binds specific sequences on gene promoters and activate their transcription. Through the regulation of gene transcription, may play a role in parathyroid gland development. This Homo sapiens (Human) protein is Chorion-specific transcription factor GCMb.